Here is an 862-residue protein sequence, read N- to C-terminus: AP-1 complex subunit gamma-2 (862 aa).

11 HEAT repeats span residues 1–28, 29–65, 101–136, 137–173, 308–345, 346–382, 384–417, 418–454, 458–496, 507–545, and 560–599; these read MNPF…EERA, VVRK…LGYP, EVLM…CSAE, MARD…KVPD, GLRV…VDSQ, AVQR…ENNV, PLAK…KFAP, EKIW…NAPD, YTVR…NNAG, TESD…RFPS, and SFVL…ATFS. The GAE domain occupies 744–859; sequence AAYPSIVAFE…LEEGQINNFP (116 aa).

The protein belongs to the adaptor complexes large subunit family. As to quaternary structure, adaptor protein complex 1 (AP-1) is a heterotetramer composed of two large adaptins (gamma-type subunit and beta-type subunit), a medium adaptin (mu-type subunit) and a small adaptin (sigma-type subunit).

It is found in the golgi apparatus. The protein resides in the cytoplasmic vesicle. It localises to the clathrin-coated vesicle membrane. In terms of biological role, subunit of clathrin-associated adaptor protein complex 1 that plays a role in protein sorting at the trans-Golgi network and early endosomes (TGN/EE). The AP complexes mediate both the recruitment of clathrin to membranes and the recognition of sorting signals within the cytosolic tails of transmembrane cargo molecules. This chain is AP-1 complex subunit gamma-2, found in Arabidopsis thaliana (Mouse-ear cress).